Consider the following 112-residue polypeptide: Macrodomain Ori protein (112 aa).

The tract at residues 91-112 is disordered; the sequence is FHTLSGGKPQVEGAEDYTEADD. The segment covering 103 to 112 has biased composition (acidic residues); it reads GAEDYTEADD.

The protein belongs to the MaoP family.

Its function is as follows. Involved in the organization of the Ori region of the chromosome into a macrodomain (MD). It constrains DNA mobility in the Ori macrodomain and limits long-distance DNA interactions with other chromosomal regions. The protein is Macrodomain Ori protein of Salmonella choleraesuis (strain SC-B67).